A 486-amino-acid polypeptide reads, in one-letter code: Aspartyl/glutamyl-tRNA(Asn/Gln) amidotransferase subunit B (486 aa).

It belongs to the GatB/GatE family. GatB subfamily. As to quaternary structure, heterotrimer of A, B and C subunits.

It carries out the reaction L-glutamyl-tRNA(Gln) + L-glutamine + ATP + H2O = L-glutaminyl-tRNA(Gln) + L-glutamate + ADP + phosphate + H(+). The catalysed reaction is L-aspartyl-tRNA(Asn) + L-glutamine + ATP + H2O = L-asparaginyl-tRNA(Asn) + L-glutamate + ADP + phosphate + 2 H(+). Allows the formation of correctly charged Asn-tRNA(Asn) or Gln-tRNA(Gln) through the transamidation of misacylated Asp-tRNA(Asn) or Glu-tRNA(Gln) in organisms which lack either or both of asparaginyl-tRNA or glutaminyl-tRNA synthetases. The reaction takes place in the presence of glutamine and ATP through an activated phospho-Asp-tRNA(Asn) or phospho-Glu-tRNA(Gln). This Leptospira borgpetersenii serovar Hardjo-bovis (strain L550) protein is Aspartyl/glutamyl-tRNA(Asn/Gln) amidotransferase subunit B.